The primary structure comprises 150 residues: D-aminoacyl-tRNA deacylase (150 aa).

Positions 138-139 (GP) match the Gly-cisPro motif, important for rejection of L-amino acids motif.

Belongs to the DTD family. In terms of assembly, homodimer.

The protein localises to the cytoplasm. It carries out the reaction glycyl-tRNA(Ala) + H2O = tRNA(Ala) + glycine + H(+). The catalysed reaction is a D-aminoacyl-tRNA + H2O = a tRNA + a D-alpha-amino acid + H(+). Its function is as follows. An aminoacyl-tRNA editing enzyme that deacylates mischarged D-aminoacyl-tRNAs. Also deacylates mischarged glycyl-tRNA(Ala), protecting cells against glycine mischarging by AlaRS. Acts via tRNA-based rather than protein-based catalysis; rejects L-amino acids rather than detecting D-amino acids in the active site. By recycling D-aminoacyl-tRNA to D-amino acids and free tRNA molecules, this enzyme counteracts the toxicity associated with the formation of D-aminoacyl-tRNA entities in vivo and helps enforce protein L-homochirality. The protein is D-aminoacyl-tRNA deacylase of Dechloromonas aromatica (strain RCB).